The chain runs to 91 residues: Small ribosomal subunit protein bS18 (91 aa).

This sequence belongs to the bacterial ribosomal protein bS18 family. As to quaternary structure, part of the 30S ribosomal subunit. Forms a tight heterodimer with protein bS6.

Binds as a heterodimer with protein bS6 to the central domain of the 16S rRNA, where it helps stabilize the platform of the 30S subunit. This is Small ribosomal subunit protein bS18 from Wolbachia pipientis wMel.